Here is a 240-residue protein sequence, read N- to C-terminus: Ribonuclease HII (240 aa).

The 190-residue stretch at 21-210 folds into the RNase H type-2 domain; that stretch reads GLVAGVDEAG…VAAAVQRTVV (190 aa). 3 residues coordinate a divalent metal cation: Asp-27, Glu-28, and Asp-119.

This sequence belongs to the RNase HII family. Mn(2+) serves as cofactor. The cofactor is Mg(2+).

The protein localises to the cytoplasm. It catalyses the reaction Endonucleolytic cleavage to 5'-phosphomonoester.. In terms of biological role, endonuclease that specifically degrades the RNA of RNA-DNA hybrids. In Paracidovorax citrulli (strain AAC00-1) (Acidovorax citrulli), this protein is Ribonuclease HII.